A 297-amino-acid chain; its full sequence is NAC domain-containing protein 72 (297 aa).

One can recognise an NAC domain in the interval 14-162 (LPPGFRFYPT…DWVLCRIYKK (149 aa)). The DNA-binding element occupies 111-168 (VGIKKALVFYAGKAPKGTKTNWIMHEYRLIEHSRSHGSSKLDDWVLCRIYKKTSGSQR). Disordered regions lie at residues 168-195 (RQAV…SQLD) and 259-278 (GEAE…LTQS). Over residues 266–277 (VNRQQNSSGLTQ) the composition is skewed to polar residues.

In terms of tissue distribution, expressed in leaves and in root pericycle and epidermis.

The protein resides in the nucleus. Functionally, transcription factors that bind specifically to the 5'-CATGTG-3' motif and with bipartite regions with 5'-CGTr-3' and 5'-YACG-3' as cores. Involved in the regulation of metabolic reprogramming during senescence by promoting the chloroplast protein degradation and the catabolism of lysine, phytol and free fatty acids via the induction of CV, LKR/SDH and PES1 expression. Also triggers the degradation of starch and the accumulation of mono- and disaccharides during senescence by enhancing the expression of AMY1, SFP1 and SWEET15. The chain is NAC domain-containing protein 72 from Arabidopsis thaliana (Mouse-ear cress).